A 245-amino-acid chain; its full sequence is DNA repair protein RecO (245 aa).

It belongs to the RecO family.

Its function is as follows. Involved in DNA repair and RecF pathway recombination. The sequence is that of DNA repair protein RecO from Porphyromonas gingivalis (strain ATCC BAA-308 / W83).